Consider the following 124-residue polypeptide: Kinocilin (124 aa).

Transmembrane regions (helical) follow at residues 13–33 (LQLA…GISV) and 40–60 (MGGV…YPFL). The tract at residues 80 to 124 (PHPGADHGEGRSSTNGNKEGARSSLSTVSRTLEKLKPGTRGAEEC) is disordered. Residues 90 to 109 (RSSTNGNKEGARSSLSTVSR) are compositionally biased toward polar residues. The segment covering 110–124 (TLEKLKPGTRGAEEC) has biased composition (basic and acidic residues).

The protein localises to the membrane. Its function is as follows. May play a role in stabilizing dense microtubular networks or in vesicular trafficking. The chain is Kinocilin (KNCN) from Homo sapiens (Human).